The primary structure comprises 358 residues: MSKDNPKDFGTPSDSKERLKAIETAMTQIEKAFGKGSIMRLGAESKLDVQAVSTGSLSLDLALGVGGIPRGRITEIYGPESGGKTTLALSVIAQAQRAGGTCAFIDAEHALDPVYARSLGVNTDELLVSQPDNGEQALEIMELLVRSGAIDVVVVDSVAALTPRAEIEGEMGDSLPGLQARLMSQALRKLTAILSKTGTAAIFINQVREKIGVMYGNPETTTGGRALKFYASVRLDVRKIGQPVKLGNDAVGNTVKVKTVKNKVAPPFKEVELTLLYGKGFDQLSDLVTLAADMDIIKKAGSFYSYGEERIGQGKEKAIAYIAERPELEQEIRDRVLAAIKEGRDPIAAVPETPALAE.

78–85 contributes to the ATP binding site; that stretch reads GPESGGKT.

This sequence belongs to the RecA family.

It localises to the cytoplasm. Can catalyze the hydrolysis of ATP in the presence of single-stranded DNA, the ATP-dependent uptake of single-stranded DNA by duplex DNA, and the ATP-dependent hybridization of homologous single-stranded DNAs. It interacts with LexA causing its activation and leading to its autocatalytic cleavage. The chain is Protein RecA from Deinococcus geothermalis (strain DSM 11300 / CIP 105573 / AG-3a).